Reading from the N-terminus, the 279-residue chain is Acetylglutamate kinase (279 aa).

Substrate contacts are provided by residues 62 to 63 (GG), R84, and N177.

The protein belongs to the acetylglutamate kinase family. ArgB subfamily.

It localises to the cytoplasm. The enzyme catalyses N-acetyl-L-glutamate + ATP = N-acetyl-L-glutamyl 5-phosphate + ADP. It participates in amino-acid biosynthesis; L-arginine biosynthesis; N(2)-acetyl-L-ornithine from L-glutamate: step 2/4. Functionally, catalyzes the ATP-dependent phosphorylation of N-acetyl-L-glutamate. The sequence is that of Acetylglutamate kinase from Pseudothermotoga lettingae (strain ATCC BAA-301 / DSM 14385 / NBRC 107922 / TMO) (Thermotoga lettingae).